Reading from the N-terminus, the 1083-residue chain is Ubiquitin-protein ligase E3C (1083 aa).

Composition is skewed to basic and acidic residues over residues 1–10 (MFSFEGDFKT) and 20–40 (SRKE…RKRE). Residues 1 to 40 (MFSFEGDFKTRPKVSLGGASRKEEKASLLHRTQEERRKRE) are disordered. The segment at 1 to 60 (MFSFEGDFKTRPKVSLGGASRKEEKASLLHRTQEERRKREEERRRLKNAIIIQSFIRGYR) is cis-determinant of acceptor ubiquitin-binding. In terms of domain architecture, IQ spans 45–74 (RLKNAIIIQSFIRGYRDRKQQYSIQRSAFD). The interval 355-385 (SPASASCHDSASDSEEESEEADKPSSPEDGR) is disordered. Positions 375–385 (ADKPSSPEDGR) are enriched in basic and acidic residues. Residues 744-1083 (NEPDLKKRIR…IECAAGFELS (340 aa)) enclose the HECT domain. A Glycyl lysine isopeptide (Lys-Gly) (interchain with G-Cter in ubiquitin); by autocatalysis cross-link involves residue K903. Catalysis depends on C1051, which acts as the Glycyl thioester intermediate.

The protein belongs to the UBE3C family. Interacts with 26S proteasomes. Interacts (via the HECT domain) with UBE2D1 and, less efficiently, with UBE2L3. Post-translationally, autoubiquitinated; promoting its own degradation. Highly expressed in skeletal muscle. Detected at much lower levels in kidney and pancreas.

It catalyses the reaction S-ubiquitinyl-[E2 ubiquitin-conjugating enzyme]-L-cysteine + [acceptor protein]-L-lysine = [E2 ubiquitin-conjugating enzyme]-L-cysteine + N(6)-ubiquitinyl-[acceptor protein]-L-lysine.. It functions in the pathway protein modification; protein ubiquitination. Functionally, E3 ubiquitin-protein ligase that specifically catalyzes 'Lys-29'- and 'Lys-48'-linked polyubiquitin chains. Accepts ubiquitin from the E2 ubiquitin-conjugating enzyme UBE2D1 in the form of a thioester and then directly transfers the ubiquitin to targeted substrates. Associates with the proteasome and promotes elongation of ubiquitin chains on substrates bound to the 26S proteasome. Also catalyzes 'Lys-29'- and 'Lys-48'-linked ubiquitination of 26S proteasome subunit ADRM1/RPN13 in response to proteotoxic stress, impairing the ability of the proteasome to bind and degrade ubiquitin-conjugated proteins. Acts as a negative regulator of autophagy by mediating 'Lys-29'- and 'Lys-48'-linked ubiquitination of PIK3C3/VPS34, promoting its degradation. Can assemble unanchored poly-ubiquitin chains in either 'Lys-29'- or 'Lys-48'-linked polyubiquitin chains; with some preference for 'Lys-48' linkages. Acts as a negative regulator of type I interferon by mediating 'Lys-48'-linked ubiquitination of IRF3 and IRF7, leading to their degradation by the proteasome. Catalyzes ubiquitination and degradation of CAND2. The chain is Ubiquitin-protein ligase E3C from Homo sapiens (Human).